The following is a 926-amino-acid chain: OTU domain-containing protein 7A (926 aa).

The tract at residues 75-99 (PHVFNEGRGPKQPEREPQPGHKVER) is disordered. The span at 82-99 (RGPKQPEREPQPGHKVER) shows a compositional bias: basic and acidic residues. S119 bears the Phosphoserine mark. The TRAF-binding stretch occupies residues 168–410 (ERDLIEQATM…AVDPGKDWEW (243 aa)). Residues 183-449 (AGRLNWWSTV…VTWIRIPSET (267 aa)) are catalytic. An OTU domain is found at 199–374 (LLPLATTGDG…QAHFSALVSM (176 aa)). Residue D207 is part of the active site. The Nucleophile role is filled by C210. The active-site Proton acceptor is the H367. Disordered regions lie at residues 452-514 (PLAQ…DSVA), 537-613 (GLVH…DAWK), and 668-768 (EQEQ…APAR). The span at 481-491 (VCSNSNSNNGK) shows a compositional bias: low complexity. A compositionally biased stretch (basic and acidic residues) spans 492–510 (NGKDKEKEKQRKEKDKTRA). The Nuclear localization signal motif lies at 494 to 509 (KDKEKEKQRKEKDKTR). Composition is skewed to low complexity over residues 576–592 (GASA…PSPT), 677–691 (ATAA…AATA), and 729–742 (PAAG…AGGT). At R880 the chain carries Omega-N-methylarginine. Residues 884–919 (GPVQRRCQRENCAFYGRAETEHYCSYCYREELRRRR) form an A20-type zinc finger. Zn(2+) is bound by residues C890, C895, C907, and C910.

This sequence belongs to the peptidase C64 family.

The protein localises to the cytoplasm. It localises to the nucleus. It catalyses the reaction Thiol-dependent hydrolysis of ester, thioester, amide, peptide and isopeptide bonds formed by the C-terminal Gly of ubiquitin (a 76-residue protein attached to proteins as an intracellular targeting signal).. In terms of biological role, deubiquitinase, which cleaves 'Lys-11'-linked polyubiquitin chains. Might be required for PA28-20S proteasome assembly. This is OTU domain-containing protein 7A (OTUD7A) from Homo sapiens (Human).